Consider the following 277-residue polypeptide: Diaminopimelate epimerase (277 aa).

Residues Asn11 and Asn62 each contribute to the substrate site. The active-site Proton donor is Cys71. Residues 72 to 73 (GN), Asn160, Asn193, and 211 to 212 (ER) each bind substrate. The active-site Proton acceptor is the Cys220. 221 to 222 (GT) is a binding site for substrate.

The protein belongs to the diaminopimelate epimerase family. Homodimer.

The protein resides in the cytoplasm. It carries out the reaction (2S,6S)-2,6-diaminopimelate = meso-2,6-diaminopimelate. It functions in the pathway amino-acid biosynthesis; L-lysine biosynthesis via DAP pathway; DL-2,6-diaminopimelate from LL-2,6-diaminopimelate: step 1/1. In terms of biological role, catalyzes the stereoinversion of LL-2,6-diaminopimelate (L,L-DAP) to meso-diaminopimelate (meso-DAP), a precursor of L-lysine. This is Diaminopimelate epimerase from Methanococcus maripaludis (strain DSM 14266 / JCM 13030 / NBRC 101832 / S2 / LL).